The chain runs to 89 residues: Small ribosomal subunit protein uS15 (89 aa).

Belongs to the universal ribosomal protein uS15 family. Part of the 30S ribosomal subunit. Forms a bridge to the 50S subunit in the 70S ribosome, contacting the 23S rRNA.

One of the primary rRNA binding proteins, it binds directly to 16S rRNA where it helps nucleate assembly of the platform of the 30S subunit by binding and bridging several RNA helices of the 16S rRNA. Functionally, forms an intersubunit bridge (bridge B4) with the 23S rRNA of the 50S subunit in the ribosome. This is Small ribosomal subunit protein uS15 from Bartonella tribocorum (strain CIP 105476 / IBS 506).